Here is a 295-residue protein sequence, read N- to C-terminus: MSLHSPGQAFRAALAKENPLQIVGAINANHALLAQRAGYQAIYLSGGGVAAGSLGLPDLGISTLDDVLTDIRRITDVCPLPLLVDADIGFGSSAFNVARTVKSIAKAGAAALHIEDQVGAKRCGHRPNKAIVSKEEMVDRIRAAVDARTDPNFVIMARTDALAVEGLEAALDRAQAYVDAGADMLFPEAITELSMYRRFADVAQVPILANITEFGATPLFTTDELRSAHVAMALYPLSAFRAMNRAAEKVYTVLRQEGTQKNVIDIMQTRNELYESINYYQFEEKLDALYRNKKS.

A substrate-binding site is contributed by 45–47; that stretch reads SGG. 2 residues coordinate Mg(2+): D85 and D87. Residues 123 to 124, R158, E188, 210 to 212, R241, and R270 contribute to the substrate site; these read CG and NIT.

Belongs to the isocitrate lyase/PEP mutase superfamily. Methylisocitrate lyase family. As to quaternary structure, homotetramer; dimer of dimers. Requires Mg(2+) as cofactor.

It carries out the reaction (2S,3R)-3-hydroxybutane-1,2,3-tricarboxylate = pyruvate + succinate. The protein operates within organic acid metabolism; propanoate degradation. Functionally, involved in the catabolism of short chain fatty acids (SCFA) via the 2-methylcitrate cycle I (propionate degradation route). Catalyzes the thermodynamically favored C-C bond cleavage of (2R,3S)-2-methylisocitrate to yield pyruvate and succinate via an alpha-carboxy-carbanion intermediate. The chain is 2-methylisocitrate lyase from Salmonella typhimurium (strain LT2 / SGSC1412 / ATCC 700720).